Here is a 284-residue protein sequence, read N- to C-terminus: 2-dehydro-3-deoxyphosphooctonate aldolase (284 aa).

This sequence belongs to the KdsA family.

The protein resides in the cytoplasm. It carries out the reaction D-arabinose 5-phosphate + phosphoenolpyruvate + H2O = 3-deoxy-alpha-D-manno-2-octulosonate-8-phosphate + phosphate. The protein operates within carbohydrate biosynthesis; 3-deoxy-D-manno-octulosonate biosynthesis; 3-deoxy-D-manno-octulosonate from D-ribulose 5-phosphate: step 2/3. It functions in the pathway bacterial outer membrane biogenesis; lipopolysaccharide biosynthesis. The sequence is that of 2-dehydro-3-deoxyphosphooctonate aldolase from Edwardsiella ictaluri (strain 93-146).